Reading from the N-terminus, the 387-residue chain is Glutamate N-acetyltransferase (387 aa).

Residues T140, K162, T173, E257, N382, and T387 each coordinate substrate. The active-site Nucleophile is T173.

The protein belongs to the ArgJ family. Heterotetramer of two alpha and two beta chains.

It is found in the cytoplasm. The enzyme catalyses N(2)-acetyl-L-ornithine + L-glutamate = N-acetyl-L-glutamate + L-ornithine. It functions in the pathway amino-acid biosynthesis; L-arginine biosynthesis; L-ornithine and N-acetyl-L-glutamate from L-glutamate and N(2)-acetyl-L-ornithine (cyclic): step 1/1. Functionally, catalyzes the transfer of the acetyl group from N(2)-acetylornithine to glutamate, forming N-acetylglutamate and L-ornithine. The sequence is that of Glutamate N-acetyltransferase from Methanopyrus kandleri (strain AV19 / DSM 6324 / JCM 9639 / NBRC 100938).